A 158-amino-acid chain; its full sequence is Transcriptional repressor NrdR (158 aa).

Residues 3-34 fold into a zinc finger; the sequence is CPFCGNADTQVVDSRVSEEGDTIRRRRRCLSC. The 91-residue stretch at 49-139 folds into the ATP-cone domain; that stretch reads PSVVKRNGSR…VYKNFEDIGE (91 aa).

This sequence belongs to the NrdR family. It depends on Zn(2+) as a cofactor.

Its function is as follows. Negatively regulates transcription of bacterial ribonucleotide reductase nrd genes and operons by binding to NrdR-boxes. In Bordetella petrii (strain ATCC BAA-461 / DSM 12804 / CCUG 43448), this protein is Transcriptional repressor NrdR.